Consider the following 967-residue polypeptide: MAELNFKAIEEKWQKRWMEARVFEPDRKAKPKEKKFYITVAFPYLSGHLHVGHARTYTIPDVIARFKRMQGYNVLFPMGWHITGAPIVGIAERIKNRDPKTIHIYRDVYKVPEEILWKFEDPKEIVKYFMKAAKETFIRAGFSVDWTREFHTTSLFPPFSKFIEWQFWTLKDMGLVVKGAHRVRWDPVVGTPLGDHDIMEGEDVQILEYVIIKFILEENGETIYLPAATLRPETVYGVTNMWLNPEATYVKAKVRKGDREELWIVSKEAAYKLSFQDREIEVIEEFKGEKLIGKYVKNPVTGDEVIILPAEFVDPDNATGVVMSVPAHAPFDHIALEDLKKETEILLKYDIDPRVVEEISYISLISLEGYGEFPAVEEAERLGVKSQKDKEKLEQATKNIYKAEYHKGIFKIEPYAGKPVQEVKELVAKEMMEKGIAEIMYEFADKPVISRFGNQAVIKIIHDQWFIDYGNPEWKAKAREALANMTIYPESRRAQFEAVIDWLDKKACARKVGLGTPLPWDPDWVIESLSDSTIYMAYYTISRHINQLRKEGKLDAEKLDREFFDYIFREPFSEEKERKLSEKTGIPAETIHEMKEEFEYWYPLDWRCSAKDLIPNHLTFFIFNHVAIFDKKHWPKGIAVNGFGTLEGQKMSKSKGNVLNFIDAIEENGADVVRLYIMGLAEHDSDFDWRRKEVGKLRKQVERFYELVSEFATYEAKEGVELKDIDRWMLHRLNKAIEGATKALEEFRTRTAVQWAFYTVLNDLRWYLRRTEGRDDDAKRYVLRTLADVWVRLMAPFTPHISEELWEKLGGEGFVSLAPWPEPVPEWWNETVEAEEDFVKSLIEDIKEIITVAKIENPKRAYIYTAPEWKWRVVEVVAEKRDFKAAMAELMKDPEMRKHGKEVSKLIQRLIKERAFEVKRIDEEKALREAKDFIEKELGIEIIINPEEDRGGKKKQAMPLKPAVFVE.

The short motif at 43–53 is the 'HIGH' region element; it reads PYLSGHLHVGH. The short motif at 650 to 654 is the 'KMSKS' region element; that stretch reads KMSKS. Residue Lys-653 coordinates ATP.

It belongs to the class-I aminoacyl-tRNA synthetase family.

The protein localises to the cytoplasm. It carries out the reaction tRNA(Leu) + L-leucine + ATP = L-leucyl-tRNA(Leu) + AMP + diphosphate. The chain is Leucine--tRNA ligase from Thermococcus kodakarensis (strain ATCC BAA-918 / JCM 12380 / KOD1) (Pyrococcus kodakaraensis (strain KOD1)).